The following is a 405-amino-acid chain: Eukaryotic initiation factor 4A (405 aa).

The Q motif signature appears at P32 to Q60. Residues I63–I233 form the Helicase ATP-binding domain. Residue A76 to T83 participates in ATP binding. The short motif at D181 to D184 is the DEAD box element. Positions G244–I405 constitute a Helicase C-terminal domain.

The protein belongs to the DEAD box helicase family. eIF4A subfamily.

The protein localises to the cytoplasm. The catalysed reaction is ATP + H2O = ADP + phosphate + H(+). ATP-dependent RNA helicase which is a subunit of the eIF4F complex involved in cap recognition and is required for mRNA binding to ribosome. In the current model of translation initiation, eIF4A unwinds RNA secondary structures in the 5'-UTR of mRNAs which is necessary to allow efficient binding of the small ribosomal subunit, and subsequent scanning for the initiator codon. The protein is Eukaryotic initiation factor 4A (tifA) of Dictyostelium discoideum (Social amoeba).